The chain runs to 439 residues: Glucose-6-phosphate 1-dehydrogenase (439 aa).

K100 contributes to the NADP(+) binding site. Substrate-binding residues include H130, K134, E168, and D187. H192 functions as the Proton acceptor in the catalytic mechanism. K288 contacts substrate.

This sequence belongs to the glucose-6-phosphate dehydrogenase family.

The catalysed reaction is D-glucose 6-phosphate + NADP(+) = 6-phospho-D-glucono-1,5-lactone + NADPH + H(+). The protein operates within carbohydrate degradation; pentose phosphate pathway; D-ribulose 5-phosphate from D-glucose 6-phosphate (oxidative stage): step 1/3. Its function is as follows. Catalyzes the oxidation of glucose 6-phosphate to 6-phosphogluconolactone. The protein is Glucose-6-phosphate 1-dehydrogenase of Chlamydia trachomatis serovar D (strain ATCC VR-885 / DSM 19411 / UW-3/Cx).